The primary structure comprises 480 residues: Glutamate--tRNA ligase (480 aa).

A 'HIGH' region motif is present at residues 21–31; it reads PSPTGYLHVGG. 4 residues coordinate Zn(2+): Cys-110, Cys-112, Cys-137, and His-139. The short motif at 248-252 is the 'KMSKS' region element; that stretch reads KLSKR. Lys-251 contributes to the ATP binding site.

This sequence belongs to the class-I aminoacyl-tRNA synthetase family. Glutamate--tRNA ligase type 1 subfamily. Monomer. Requires Zn(2+) as cofactor.

The protein resides in the cytoplasm. It catalyses the reaction tRNA(Glu) + L-glutamate + ATP = L-glutamyl-tRNA(Glu) + AMP + diphosphate. In terms of biological role, catalyzes the attachment of glutamate to tRNA(Glu) in a two-step reaction: glutamate is first activated by ATP to form Glu-AMP and then transferred to the acceptor end of tRNA(Glu). In Mannheimia succiniciproducens (strain KCTC 0769BP / MBEL55E), this protein is Glutamate--tRNA ligase.